The chain runs to 267 residues: Cilia- and flagella-associated protein 300 (267 aa).

It belongs to the CFAP300 family. Interacts with DNAAF2. Expressed in the left-right organiser (LRO) node at 8.25 dpc.

It localises to the cytoplasm. The protein resides in the cytoskeleton. The protein localises to the cilium axoneme. Its function is as follows. Cilium- and flagellum-specific protein that plays a role in axonemal structure organization and motility. May play a role in outer and inner dynein arm assembly. The protein is Cilia- and flagella-associated protein 300 of Mus musculus (Mouse).